A 412-amino-acid polypeptide reads, in one-letter code: B3 domain-containing protein Os02g0683500 (412 aa).

The tract at residues 1–87 is disordered; that stretch reads MEFTTSSRFS…GGGGGGGGEA (87 aa). Low complexity predominate over residues 30–65; the sequence is TATAEAAPAPTSSSSSPAHHAASASASASASGSSTP. The span at 73–86 shows a compositional bias: gly residues; sequence GASGSGGGGGGGGE. The TF-B3 DNA-binding region spans 96 to 200; that stretch reads FDKVVTPSDV…RHRLFIDWKR (105 aa). Residues 374–412 are disordered; it reads RLLELPPHHHHGAESSAASSPSSSSSSKRDAHSALDLDL. The segment covering 387 to 399 has biased composition (low complexity); sequence ESSAASSPSSSSS. Over residues 400-412 the composition is skewed to basic and acidic residues; it reads SKRDAHSALDLDL.

Its subcellular location is the nucleus. The sequence is that of B3 domain-containing protein Os02g0683500 from Oryza sativa subsp. japonica (Rice).